The following is a 635-amino-acid chain: MNLEIVDLFNGHVNSIPNILPHQLATLDYLVRSIIDENKSVLLFHIMGSGKTIIALLFALVASRFKKVYILVPNINILKIFNYSMDVAINLFNSEYILENIFIHSTTSFYSLNYNDNVINYNGLSRYNNAIFIIDEAHNIFGNNTGELMTVIKNKNKIPFLLLSGSPITNTPITLSNIISLMSDENINFGDIIIQGKKVFQILLNENGVNVLKNILKGRISYYEMPSTDLPKVQYHGKKFLDTRVVYCHMSKLQEKDYNNVRKLCNNEMFEKNMNNVSLAVLGQLNFINNLDILFQEQDKELYPNLKISNGILYGDELTTLNISSKFKYFIGKITSLTGKQFIYFSNSTYGGLIIKYIMLSNGYSEYNGSQGTNPKLINGKPKTFAIVTSKMKSSLEDLLNVYNSQLNKDGSQIMFLFSSNIMSESYTLKEVRNIWFMTIPDTFSQYNQILGRSIRKFSYFDISKPVNVYLLATVYADFDDDITSLEDYSLDEINTLPFDIKKLLYLKFKTKETNRIYSILQNISDTYRMPPHPYIVELVLGEIVRQFFYHHSRISFDSKELINAIQLVLPNIDMAKKYINEVVNGHFFVSNKVFDKSLLYRYKNDIITVPFKLSHERFVWGVNFRKEYNVVSSP.

A Helicase ATP-binding domain is found at 32–185; the sequence is RSIIDENKSV…SNIISLMSDE (154 aa). An ATP-binding site is contributed by 45–52; sequence HIMGSGKT. Residues 135-138 carry the DEXH box motif; sequence DEAH. The Helicase C-terminal domain occupies 326-505; the sequence is KFKYFIGKIT…TLPFDIKKLL (180 aa).

Belongs to the helicase family. VETF subfamily. As to quaternary structure, heterodimer of a 70 kDa and a 82 kDa subunit.

The protein localises to the virion. In terms of biological role, acts with RNA polymerase to initiate transcription from early gene promoters. A DNA-dependent ATPase activity is associated with VETF. The sequence is that of Early transcription factor 70 kDa subunit (VETFS) from Erythrocebus patas (Red guenon).